We begin with the raw amino-acid sequence, 328 residues long: Biotin synthase (328 aa).

The region spanning 41–260 is the Radical SAM core domain; it reads TAIETASLLS…VALARILMPA (220 aa). Cys-56, Cys-60, and Cys-63 together coordinate [4Fe-4S] cluster. [2Fe-2S] cluster contacts are provided by Cys-100, Cys-131, Cys-191, and Arg-264.

Belongs to the radical SAM superfamily. Biotin synthase family. Homodimer. Requires [4Fe-4S] cluster as cofactor. The cofactor is [2Fe-2S] cluster.

It carries out the reaction (4R,5S)-dethiobiotin + (sulfur carrier)-SH + 2 reduced [2Fe-2S]-[ferredoxin] + 2 S-adenosyl-L-methionine = (sulfur carrier)-H + biotin + 2 5'-deoxyadenosine + 2 L-methionine + 2 oxidized [2Fe-2S]-[ferredoxin]. The protein operates within cofactor biosynthesis; biotin biosynthesis; biotin from 7,8-diaminononanoate: step 2/2. Catalyzes the conversion of dethiobiotin (DTB) to biotin by the insertion of a sulfur atom into dethiobiotin via a radical-based mechanism. In Cereibacter sphaeroides (strain ATCC 17029 / ATH 2.4.9) (Rhodobacter sphaeroides), this protein is Biotin synthase.